We begin with the raw amino-acid sequence, 350 residues long: C5a anaphylatoxin chemotactic receptor 1 (350 aa).

At 1-36 (APMENSTYDYTNYDSLGTLDPSTPVDNTVRRLRPTT) the chain is on the extracellular side. A glycan (N-linked (GlcNAc...) asparagine) is linked at Asn-5. 2 positions are modified to sulfotyrosine: Tyr-10 and Tyr-13. A helical transmembrane segment spans residues 37–63 (IVALVIYMAVFLVGVPGNALVVWVTAL). At 64 to 68 (EAKRT) the chain is on the cytoplasmic side. Residues 69-92 (VNAIWFLNLAVADLLSCLALPILF) traverse the membrane as a helical segment. The Extracellular portion of the chain corresponds to 93-109 (VSIIQEGHWPFGRAACS). A disulfide bridge connects residues Cys-108 and Cys-187. The chain crosses the membrane as a helical span at residues 110–131 (VLPSLILLNMYASILLLATISA). The Cytoplasmic portion of the chain corresponds to 132-152 (DRFLLVFNPIWCQNTRGAGLA). Residues 153 to 173 (WLACCVAWGLALLLTIPSFLY) traverse the membrane as a helical segment. The Extracellular segment spans residues 174 to 200 (RKVLQDDYPPKTTCGVDYGHEGVRAER). A helical membrane pass occupies residues 201-226 (AVAIVRLVVGFLLPLFTLSVCYTFLL). Over 227-242 (LRTWSRNGTRSTKTLK) the chain is Cytoplasmic. The chain crosses the membrane as a helical span at residues 243–265 (VVVAVVVSFFIFWLPYQVMGMIL). Topologically, residues 266-282 (ALLHPSSATFRWAIRLD) are extracellular. Residues 283–303 (PLCIALAYVNCCINPIIYVVA) form a helical membrane-spanning segment. Topologically, residues 304–350 (GKGFQGQLRKSLPSLLRNVLAEESVIQGSKSFSRSTVDTVADKCQAV) are cytoplasmic. 6 positions are modified to phosphoserine: Ser-314, Ser-317, Ser-327, Ser-332, Ser-334, and Ser-338.

The protein belongs to the G-protein coupled receptor 1 family. In terms of assembly, homodimer. May also form higher-order oligomers. Interacts (when phosphorylated) with ARRB1 and ARRB2; the interaction is associated with internalization of C5aR. Post-translationally, sulfation plays a critical role in the association of C5aR with C5a, but no significant role in the ability of the receptor to transduce a signal and mobilize calcium in response to a small peptide agonist. Phosphorylated on serine residues in response to C5a binding, resulting in internalization of the receptor and short-term desensitization to C5a.

Its subcellular location is the cell membrane. The protein resides in the cytoplasmic vesicle. In terms of biological role, receptor for the chemotactic and inflammatory peptide anaphylatoxin C5a. The ligand interacts with at least two sites on the receptor: a high-affinity site on the extracellular N-terminus, and a second site in the transmembrane region which activates downstream signaling events. Receptor activation stimulates chemotaxis, granule enzyme release, intracellular calcium release and superoxide anion production. The sequence is that of C5a anaphylatoxin chemotactic receptor 1 (C5AR1) from Oryctolagus cuniculus (Rabbit).